The following is a 450-amino-acid chain: tRNA modification GTPase MnmE (450 aa).

Positions 23, 81, and 120 each coordinate (6S)-5-formyl-5,6,7,8-tetrahydrofolate. Residues 216–373 enclose the TrmE-type G domain; it reads GIHLVLAGKP…LLKKIATLAG (158 aa). GTP contacts are provided by residues 226–231, 245–251, 270–273, and 337–340; these read NAGKSS, TPQAGTT, DTAG, and NKAD. Mg(2+)-binding residues include Ser-230 and Thr-251. Lys-450 is a (6S)-5-formyl-5,6,7,8-tetrahydrofolate binding site.

Belongs to the TRAFAC class TrmE-Era-EngA-EngB-Septin-like GTPase superfamily. TrmE GTPase family. As to quaternary structure, homodimer. Heterotetramer of two MnmE and two MnmG subunits. The cofactor is K(+).

Its subcellular location is the cytoplasm. In terms of biological role, exhibits a very high intrinsic GTPase hydrolysis rate. Involved in the addition of a carboxymethylaminomethyl (cmnm) group at the wobble position (U34) of certain tRNAs, forming tRNA-cmnm(5)s(2)U34. This Dichelobacter nodosus (strain VCS1703A) protein is tRNA modification GTPase MnmE.